Reading from the N-terminus, the 106-residue chain is Late cornified envelope protein 2A (106 aa).

The span at 1 to 10 (MSCQQNQQQC) shows a compositional bias: low complexity. The disordered stretch occupies residues 1 to 25 (MSCQQNQQQCQPPPKCPPKCPPKCP). The segment covering 11–25 (QPPPKCPPKCPPKCP) has biased composition (pro residues).

The protein belongs to the LCE family. As to quaternary structure, interacts with CYSRT1. Skin-specific. Expression was readily detected in adult trunk skin, adult arm skin, fetal skin, penal skin, vulva, esophagus and tongue. Not expressed in the cervix, rectum, lung, colon, or placenta.

Its function is as follows. Precursors of the cornified envelope of the stratum corneum. The polypeptide is Late cornified envelope protein 2A (LCE2A) (Homo sapiens (Human)).